A 571-amino-acid polypeptide reads, in one-letter code: uncharacterized protein (571 aa).

At 1 to 3 (MNS) the chain is on the cytoplasmic side. The helical transmembrane segment at 4–24 (LQILSFVGFTLLVAVITWWKV) threads the bilayer. Residues 25 to 74 (RKTDTGSQQGYFLAGRSLKAPVIAASLMLTNLSTEQLVGLSGQAYKSGMS) lie on the Periplasmic side of the membrane. Residues 75 to 95 (VMGWEVTSAVTLIFLALIFLP) form a helical membrane-spanning segment. The Cytoplasmic segment spans residues 96 to 118 (RYLKRGIATIPDFLEERYDKTTR). Residues 119–139 (IIIDFCFLIATGVCFLPIVLY) form a helical membrane-spanning segment. The Periplasmic segment spans residues 140 to 162 (SGALALNSLFHVGESLQISHGAA). A helical membrane pass occupies residues 163–183 (IWLLVILLGLAGILYAVIGGL). At 184-191 (RAMAVADS) the chain is on the cytoplasmic side. The chain crosses the membrane as a helical span at residues 192–212 (INGIGLVIGGLMVPVFGLIAM). Topologically, residues 213–240 (GKGSFMQGIEQLTTVHAEKLNSIGGPTD) are periplasmic. A helical transmembrane segment spans residues 241–261 (PLPIGAAFTGLILVNTFYWCT). Residues 262 to 283 (NQGIVQRTLASKSLAEGQKGAL) lie on the Cytoplasmic side of the membrane. A helical transmembrane segment spans residues 284–304 (LTAVLKMLDPLVLVLPGLIAF). Over 305–324 (HLYQDLPKADMAYPTLVNNV) the chain is Periplasmic. The helical transmembrane segment at 325–345 (LPVPMVGFFGAVLFGAVISTF) threads the bilayer. Over 346–380 (NGFLNSASTLFSMGIYRRIINQNAEPQQLVTVGRK) the chain is Cytoplasmic. Residues 381-401 (FGFFIAIVSVLVAPWIANAPQ) form a helical membrane-spanning segment. Residues 402–415 (GLYSWMKQLNGIYN) lie on the Periplasmic side of the membrane. A helical transmembrane segment spans residues 416–436 (VPLVTIIIMGFFFPRIPALAA). Lysine 437 is a topological domain (cytoplasmic). A helical transmembrane segment spans residues 438–458 (VAMGIGIISYITINYLVKFDF). At 459 to 460 (HF) the chain is on the periplasmic side. The helical transmembrane segment at 461–481 (LYVLACTFCINVVVMLVIGFI) threads the bilayer. Residues 482–505 (KPRATPFTFKDAFAVDMKPWKNVK) are Cytoplasmic-facing. Residues 506–526 (IASIGILFAMIGVYAGLAEFG) form a helical membrane-spanning segment. Residues 527–532 (GYGTRW) lie on the Periplasmic side of the membrane. A helical transmembrane segment spans residues 533–553 (LAMISYFIAAVVIVYLIFDSW). The Cytoplasmic segment spans residues 554 to 571 (RHRHDPAVTFTPDGKDSL).

The protein belongs to the sodium:solute symporter (SSF) (TC 2.A.21) family.

It is found in the cell inner membrane. This is an uncharacterized protein from Escherichia coli (strain K12).